The primary structure comprises 273 residues: Kit ligand (273 aa).

Positions methionine 1–threonine 25 are cleaved as a signal peptide. Residues glutamate 26–histidine 214 lie on the Extracellular side of the membrane. 2 disulfide bridges follow: cysteine 29–cysteine 114 and cysteine 68–cysteine 163. N-linked (GlcNAc...) asparagine; partial glycosylation is found at asparagine 90 and asparagine 118. Residue asparagine 145 is glycosylated (N-linked (GlcNAc...) asparagine). O-linked (GalNAc...) serine glycosylation occurs at serine 167. Residues threonine 168 and threonine 180 are each glycosylated (O-linked (GalNAc...) threonine). A glycan (N-linked (GlcNAc...) asparagine) is linked at asparagine 195. Residues tryptophan 215–tryptophan 237 traverse the membrane as a helical segment. The Cytoplasmic portion of the chain corresponds to lysine 238 to valine 273.

Belongs to the SCF family. Homodimer, non-covalently linked. Heterotetramer with KIT, binding two KIT molecules; thereby mediates KIT dimerization and subsequent activation by autophosphorylation. A soluble form (sKITLG) is produced by proteolytic processing of isoform 1 in the extracellular domain. In terms of processing, found in two differentially glycosylated forms, LMW-SCF and HMW-SCF. LMW-SCF is fully N-glycosylated at Asn-145, partially N-glycosylated at Asn-90, O-glycosylated at Ser-167, Thr-168 and Thr-180, and not glycosylated at Asn-97 or Asn-118. HMW-SCF is N-glycosylated at Asn-118, Asn-90 and Asn-145, O-glycosylated at Ser-167, Thr-168 and Thr-180, and not glycosylated at Asn-97. Post-translationally, a soluble form exists as a cleavage product of the extracellular domain.

The protein localises to the cell membrane. Its subcellular location is the cytoplasm. The protein resides in the cytoskeleton. It is found in the cell projection. It localises to the lamellipodium. The protein localises to the filopodium. Its subcellular location is the secreted. In terms of biological role, ligand for the receptor-type protein-tyrosine kinase KIT. Plays an essential role in the regulation of cell survival and proliferation, hematopoiesis, stem cell maintenance, gametogenesis, mast cell development, migration and function, and in melanogenesis. KITLG/SCF binding can activate several signaling pathways. Promotes phosphorylation of PIK3R1, the regulatory subunit of phosphatidylinositol 3-kinase, and subsequent activation of the kinase AKT1. KITLG/SCF and KIT also transmit signals via GRB2 and activation of RAS, RAF1 and the MAP kinases MAPK1/ERK2 and/or MAPK3/ERK1. KITLG/SCF and KIT promote activation of STAT family members STAT1, STAT3 and STAT5. KITLG/SCF and KIT promote activation of PLCG1, leading to the production of the cellular signaling molecules diacylglycerol and inositol 1,4,5-trisphosphate. KITLG/SCF acts synergistically with other cytokines, probably interleukins. This is Kit ligand from Homo sapiens (Human).